Here is a 132-residue protein sequence, read N- to C-terminus: Global transcriptional regulator Spx (132 aa).

A disulfide bond links cysteine 10 and cysteine 13.

It belongs to the ArsC family. Spx subfamily. As to quaternary structure, interacts with the C-terminal domain of the alpha subunit of the RNAP.

Its subcellular location is the cytoplasm. Functionally, global transcriptional regulator that plays a key role in stress response and exerts either positive or negative regulation of genes. Acts by interacting with the C-terminal domain of the alpha subunit of the RNA polymerase (RNAP). This interaction can enhance binding of RNAP to the promoter region of target genes and stimulate their transcription, or block interaction of RNAP with activator. The sequence is that of Global transcriptional regulator Spx from Lactiplantibacillus plantarum (strain ATCC BAA-793 / NCIMB 8826 / WCFS1) (Lactobacillus plantarum).